The following is a 206-amino-acid chain: Nucleoside triphosphate pyrophosphatase (206 aa).

Residue Asp-78 is the Proton acceptor of the active site.

The protein belongs to the Maf family. Requires a divalent metal cation as cofactor.

Its subcellular location is the cytoplasm. The catalysed reaction is a ribonucleoside 5'-triphosphate + H2O = a ribonucleoside 5'-phosphate + diphosphate + H(+). It carries out the reaction a 2'-deoxyribonucleoside 5'-triphosphate + H2O = a 2'-deoxyribonucleoside 5'-phosphate + diphosphate + H(+). Its function is as follows. Nucleoside triphosphate pyrophosphatase. May have a dual role in cell division arrest and in preventing the incorporation of modified nucleotides into cellular nucleic acids. This is Nucleoside triphosphate pyrophosphatase from Prochlorococcus marinus (strain MIT 9312).